Here is a 106-residue protein sequence, read N- to C-terminus: Large ribosomal subunit protein uL24 (106 aa).

This sequence belongs to the universal ribosomal protein uL24 family. As to quaternary structure, part of the 50S ribosomal subunit.

Functionally, one of two assembly initiator proteins, it binds directly to the 5'-end of the 23S rRNA, where it nucleates assembly of the 50S subunit. Its function is as follows. One of the proteins that surrounds the polypeptide exit tunnel on the outside of the subunit. The protein is Large ribosomal subunit protein uL24 of Azobacteroides pseudotrichonymphae genomovar. CFP2.